The chain runs to 406 residues: Tryptophan synthase beta chain (406 aa).

At lysine 99 the chain carries N6-(pyridoxal phosphate)lysine.

The protein belongs to the TrpB family. As to quaternary structure, tetramer of two alpha and two beta chains. Requires pyridoxal 5'-phosphate as cofactor.

It catalyses the reaction (1S,2R)-1-C-(indol-3-yl)glycerol 3-phosphate + L-serine = D-glyceraldehyde 3-phosphate + L-tryptophan + H2O. The protein operates within amino-acid biosynthesis; L-tryptophan biosynthesis; L-tryptophan from chorismate: step 5/5. Its function is as follows. The beta subunit is responsible for the synthesis of L-tryptophan from indole and L-serine. The polypeptide is Tryptophan synthase beta chain (Methylobacterium sp. (strain 4-46)).